The sequence spans 257 residues: MPKRTGDILMSSPLSKFRRKLNFDSPYTSRAAAPTVQGIKRRSWTYRPMYRKPRMYRMYRSPDVPFGCEGPCKVQSYEQRDDVKHTGVVRCVSDVTRGSGITHRVGKRFCIKSIYILGKIWMDENIKKQNHTNQVMFFLVRDRRPYGTSPMDFGQVFNMFDNEPSTATVKNDLRDRYQVMRKFHATVVGGPSGMKEQCLLKRFFKVNTHVVYNHQEQAKYENHTENALLLYMACTHASNPVYATLKIRIYFYDAVTN.

Positions 3–20 (KRTGDILMSSPLSKFRRK) match the Bipartite nuclear localization signal motif. A Nuclear localization signal motif is present at residues 40–54 (KRRSWTYRPMYRKPR). A zinc finger spans residues 68-85 (CEGPCKVQSYEQRDDVKH). Residues 101-122 (ITHRVGKRFCIKSIYILGKIWM) carry the Nuclear export signal motif. The Bipartite nuclear localization signal motif lies at 201–248 (KRFFKVNTHVVYNHQEQAKYENHTENALLLYMACTHASNPVYATLKIR).

It belongs to the geminiviridae capsid protein family. In terms of assembly, homomultimer. Binds to single-stranded and double-stranded viral DNA. Interacts (via nuclear localization signals) with host importin alpha-1a.

The protein localises to the virion. It is found in the host nucleus. In terms of biological role, encapsidates the viral genome into characteristic twinned ('geminate') particles. Binds the genomic viral ssDNA and shuttles it into and out of the cell nucleus. Plays a role in protection of the genome from degradation, virus acquisition and transmission by insect vectors, infectivity, and systemic movement. The CP of monopartite geminiviruses is absolutely essential for virus movement. This chain is Capsid protein, found in Solanum lycopersicum (Tomato).